The sequence spans 282 residues: tRNA (guanine-N(1)-)-methyltransferase (282 aa).

The disordered stretch occupies residues Thr-77–Gly-114. S-adenosyl-L-methionine contacts are provided by residues Gly-149 and Ile-173 to Leu-178.

The protein belongs to the RNA methyltransferase TrmD family. Homodimer.

It localises to the cytoplasm. The enzyme catalyses guanosine(37) in tRNA + S-adenosyl-L-methionine = N(1)-methylguanosine(37) in tRNA + S-adenosyl-L-homocysteine + H(+). Specifically methylates guanosine-37 in various tRNAs. The protein is tRNA (guanine-N(1)-)-methyltransferase of Corynebacterium jeikeium (strain K411).